The primary structure comprises 127 residues: Aspartate 1-decarboxylase (127 aa).

Residue S25 is the Schiff-base intermediate with substrate; via pyruvic acid of the active site. Pyruvic acid (Ser) is present on S25. T57 is a substrate binding site. Y58 (proton donor) is an active-site residue. 73-75 (GAA) serves as a coordination point for substrate.

It belongs to the PanD family. Heterooctamer of four alpha and four beta subunits. It depends on pyruvate as a cofactor. In terms of processing, is synthesized initially as an inactive proenzyme, which is activated by self-cleavage at a specific serine bond to produce a beta-subunit with a hydroxyl group at its C-terminus and an alpha-subunit with a pyruvoyl group at its N-terminus.

Its subcellular location is the cytoplasm. The catalysed reaction is L-aspartate + H(+) = beta-alanine + CO2. The protein operates within cofactor biosynthesis; (R)-pantothenate biosynthesis; beta-alanine from L-aspartate: step 1/1. Its function is as follows. Catalyzes the pyruvoyl-dependent decarboxylation of aspartate to produce beta-alanine. This is Aspartate 1-decarboxylase from Carboxydothermus hydrogenoformans (strain ATCC BAA-161 / DSM 6008 / Z-2901).